The chain runs to 107 residues: Ig kappa chain V-VI region XRPC 44 (107 aa).

Residues 1–23 (EIVLTQSPAITAASLGQKVTITC) form a framework-1 region. A disulfide bond links cysteine 23 and cysteine 87. The segment at 24 to 33 (SASSSVSYMH) is complementarity-determining-1. Residues 34–48 (WYQQKSGTSPKPWIY) form a framework-2 region. Residues 49 to 55 (EISKLAS) are complementarity-determining-2. A framework-3 region spans residues 56-87 (GVPARFSGSGSGTSYSLTISSMEAEDAAIYYC). Residues 88–96 (QQWNYPLWT) form a complementarity-determining-3 region. Positions 97 to 106 (FGGGTKLEIK) are framework-4.

This chain is Ig kappa chain V-VI region XRPC 44, found in Mus musculus (Mouse).